The chain runs to 328 residues: DhaKLM operon coactivator DhaQ (328 aa).

Residues 6-328 (STNEIPEEML…LNVPTGAFAW (323 aa)) enclose the DhaK domain. The residue at position 215 (His215) is a Tele-(1,2,3-trihydroxypropan-2-yl)histidine.

Homodimer. Interacts with a homodimer of DhaS.

Its function is as follows. Coactivator for the transcription factor DhaS. The heterotetramer formed by DhaQ and DhaS functions as a transcriptional regulator. Activated by covalent binding of dihydroxyacetone to DhaQ. The complex activates the dhaKLM operon. The polypeptide is DhaKLM operon coactivator DhaQ (dhaQ) (Lactococcus lactis subsp. lactis (strain IL1403) (Streptococcus lactis)).